We begin with the raw amino-acid sequence, 949 residues long: Syndetin (949 aa).

The tract at residues 1-28 is disordered; sequence MQKIKSLMTRQGLRSPQESVHDLSPIEN. The segment covering 8-18 has biased composition (polar residues); it reads MTRQGLRSPQE. Coiled coils occupy residues 82–104 and 198–226; these read SLQE…LERV and YSCI…LSKI. The disordered stretch occupies residues 509–581; it reads FEIQADSKDD…ETLRSRKKSD (73 aa). Over residues 569–581 the composition is skewed to basic and acidic residues; the sequence is VSRETLRSRKKSD.

It belongs to the syndetin family. In terms of assembly, component of the endosome-associated retrograde protein (EARP) complex.

It is found in the recycling endosome. Its subcellular location is the membrane. Its function is as follows. Acts as a component of the EARP complex that is involved in endocytic recycling. The EARP complex associates with Rab4-positive endosomes and promotes recycling of internalized transferrin receptor (TFRC) to the plasma membrane. The sequence is that of Syndetin from Gallus gallus (Chicken).